We begin with the raw amino-acid sequence, 128 residues long: Large ribosomal subunit protein uL18 (128 aa).

It belongs to the universal ribosomal protein uL18 family. In terms of assembly, part of the 50S ribosomal subunit; part of the 5S rRNA/L5/L18/L25 subcomplex. Contacts the 5S and 23S rRNAs.

Its function is as follows. This is one of the proteins that bind and probably mediate the attachment of the 5S RNA into the large ribosomal subunit, where it forms part of the central protuberance. This chain is Large ribosomal subunit protein uL18, found in Acidothermus cellulolyticus (strain ATCC 43068 / DSM 8971 / 11B).